The sequence spans 404 residues: Protrudin (404 aa).

A disordered region spans residues 1 to 25 (MQSSDRDLSGPEASPSVMPEVLSEC). The Cytoplasmic portion of the chain corresponds to 1-63 (MQSSDRDLSG…LKDAGDGVRY (63 aa)). Residues 1 to 92 (MQSSDRDLSG…LFLTLNEGAW (92 aa)) are sufficient for homooligomerization. Residues 1 to 205 (MQSSDRDLSG…LYLLPLCWVL (205 aa)) form a sufficient for localization to endoplasmic reticulum tubular network and for interactions with REEP1, REEP5, ATL1, ATL2, ATL3 and SPAST region. Residues 51-64 (LEPLKDAGDGVRYL) form a necessary for interaction with RAB11A and function in neurite outgrowth region. A helical transmembrane segment spans residues 64 to 85 (LLRWQMPLCSLLTCLGLNILFL). At 86–90 (TLNEG) the chain is on the lumenal side. Residues 91–109 (AWYSVGALIISVPALLGYL) form a helical membrane-spanning segment. The Cytoplasmic segment spans residues 110-187 (QEVCRAQLPE…NPVVSSQFYG (78 aa)). Residues 188–208 (ALLGMVCMLYLLPLCWVLALL) constitute an intramembrane region (helical). Over 209-404 (NSTLFLGNGE…CASCNQTLSK (196 aa)) the chain is Cytoplasmic. A disordered region spans residues 259-299 (DSTPAPTPTEDLTPGSVEEAEEAEPDEEFKDAIEEDDEGTP). The necessary for interaction with KIF5A stretch occupies residues 271 to 354 (TPGSVEEAEE…GCAATFSVLK (84 aa)). Acidic residues predominate over residues 276-299 (EEAEEAEPDEEFKDAIEEDDEGTP). Residues 286–292 (EFKDAIE) are necessary for interaction with VAPA. The FYVE-type zinc-finger motif lies at 337-403 (TNNFGNCAGC…VCASCNQTLS (67 aa)). The Zn(2+) site is built by C343, C346, C359, C362, C367, C370, C395, and C398.

Can form homooligomers (monomers, dimers and tetramers). Interacts with FKBP8; may negatively regulate ZFYVE27 phosphorylation. Interacts with VAPA (via MSP domain); may regulate ZFYVE27 retention in the endoplasmic reticulum and its function in cell projections formation. Interacts with VAPB (via MSP domain). Interacts with RAB11A (GDP-bound form); regulates RAB11A. Interacts with RAB11B (GDP-bound form), REEP1, REEP5, ATL1, ATL2, ATL3, SPAST, SURF4, KIF5A, KIF5B, KIF5C and RTN3. In terms of processing, phosphorylated. Phosphorylation is induced by NGF through the MAPK/ERK pathway and modulates interaction with RAB11A.

It localises to the recycling endosome membrane. Its subcellular location is the endoplasmic reticulum membrane. It is found in the cell projection. The protein resides in the growth cone membrane. Functionally, key regulator of RAB11-dependent vesicular trafficking during neurite extension through polarized membrane transport. Promotes axonal elongation and contributes to the establishment of neuronal cell polarity. Involved in nerve growth factor-induced neurite formation in VAPA-dependent manner. Contributes to both the formation and stabilization of the tubular ER network. Involved in ER morphogenesis by regulating the sheet-to-tubule balance and possibly the density of tubule interconnections. Acts as an adapter protein that facilitates the interaction of KIF5A with VAPA, VAPB, SURF4, RAB11A, RAB11B and RTN3 and the ZFYVE27-KIF5A complex contributes to the transport of these proteins in neurons. Can induce formation of neurite-like membrane protrusions in non-neuronal cells in a KIF5A/B-dependent manner. The chain is Protrudin (Zfyve27) from Rattus norvegicus (Rat).